The sequence spans 1293 residues: Phosphoribosylformylglycinamidine synthase (1293 aa).

ATP-binding positions include 305-316 (GAATGSGGEIRD) and Ala-676. A disordered region spans residues 305–327 (GAATGSGGEIRDEGATGRGSKPK). Mg(2+) contacts are provided by Asp-677, Glu-716, Asn-720, and Asp-884. Residue Ser-886 coordinates ATP. Positions 1040–1293 (MAILREQGVN…MFRNARVNLG (254 aa)) constitute a Glutamine amidotransferase type-1 domain. Catalysis depends on Cys-1133, which acts as the Nucleophile. Catalysis depends on residues His-1258 and Glu-1260.

It in the N-terminal section; belongs to the FGAMS family. Monomer.

Its subcellular location is the cytoplasm. It catalyses the reaction N(2)-formyl-N(1)-(5-phospho-beta-D-ribosyl)glycinamide + L-glutamine + ATP + H2O = 2-formamido-N(1)-(5-O-phospho-beta-D-ribosyl)acetamidine + L-glutamate + ADP + phosphate + H(+). It participates in purine metabolism; IMP biosynthesis via de novo pathway; 5-amino-1-(5-phospho-D-ribosyl)imidazole from N(2)-formyl-N(1)-(5-phospho-D-ribosyl)glycinamide: step 1/2. Functionally, phosphoribosylformylglycinamidine synthase involved in the purines biosynthetic pathway. Catalyzes the ATP-dependent conversion of formylglycinamide ribonucleotide (FGAR) and glutamine to yield formylglycinamidine ribonucleotide (FGAM) and glutamate. In Shewanella oneidensis (strain ATCC 700550 / JCM 31522 / CIP 106686 / LMG 19005 / NCIMB 14063 / MR-1), this protein is Phosphoribosylformylglycinamidine synthase.